The chain runs to 515 residues: MAEQVALSRTQVCGILREELYQGDAFHQSDTHIFIIMGASGDLAKKKIYPTIWWLFRDGLLPEDTFIVGYARSNLTVDDIRKQSEPYFKATPEENLKLEEFFSRNSYVAGQYDEPASFQRLNAHMNSLHHGSQANRLFYLALPPTVYEAVTKNIKETCMSQIGWNRVIVEKPFGKDLQSSDKLSNHISSLFHEDQIYRIDHYLGKEMVQNLMVLRFGNRIFGPIWNRDNIACVIFTFKEPFGTLGRGGYFDEFGIIRDVMQNHLLQMLCLVAMEKPASTNSDDVRDEKVKVLKCISEVRATDVVLGQYVGNPDGEGEATKGYLDDPTVPRGSTTATFAAVVLYVENERWDGVPFILRCGKALNERKAEVRLQFRDVAGDIFQRQCKRNELVIRVQPNEAVYTKMMTKKPGMFFNPEESELDLTYGNRYKDVKLPDAYERLILDVFCGSQMHFVRSDELREAWRIFTPLLHHIEKEKTQPIAYVYGSRGPPEADELMKRVGFQYEGTYKWVNPHKL.

Ala-2 bears the N-acetylalanine mark. Ser-8 carries the phosphoserine modification. At Thr-10 the chain carries Phosphothreonine. Residues 38–45 (GASGDLAK) and Arg-72 contribute to the NADP(+) site. Lys-89 carries the post-translational modification N6-acetyllysine. NADP(+) contacts are provided by Tyr-147 and Lys-171. D-glucose 6-phosphate is bound by residues Lys-171, 201–205 (HYLGK), Glu-239, and Asp-258. N6-(2-hydroxyisobutyryl)lysine; alternate is present on Lys-171. Lys-171 is subject to N6-acetyllysine; alternate. The active-site Proton acceptor is His-263. NADP(+) is bound at residue Arg-357. Residues Lys-360 and Arg-365 each coordinate D-glucose 6-phosphate. Lys-366, Arg-370, and Arg-393 together coordinate NADP(+). D-glucose 6-phosphate is bound at residue Gln-395. NADP(+) contacts are provided by residues 401 to 403 (YTK) and 421 to 423 (DLT). At Lys-403 the chain carries N6-acetyllysine. Lys-432 is subject to N6-acetyllysine. An NADP(+)-binding site is contributed by Arg-487. Lys-497 bears the N6-acetyllysine mark. Positions 503 and 509 each coordinate NADP(+). Tyr-503 bears the Phosphotyrosine mark.

This sequence belongs to the glucose-6-phosphate dehydrogenase family. As to quaternary structure, homotetramer; dimer of dimers. Interacts with SIRT2; the interaction is enhanced by H(2)O(2) treatment. Forms a ternary complex with ALDOB and TP53; this interaction is direct. ALDOB stabilizes the complex inhibiting G6PD activity and keeping oxidative pentose phosphate metabolism in check. Acetylated by ELP3 at Lys-403; acetylation inhibits its homodimerization and enzyme activity. Deacetylated by SIRT2 at Lys-403; deacetylation stimulates its enzyme activity.

The protein resides in the cytoplasm. It is found in the cytosol. Its subcellular location is the membrane. The catalysed reaction is D-glucose 6-phosphate + NADP(+) = 6-phospho-D-glucono-1,5-lactone + NADPH + H(+). It functions in the pathway carbohydrate degradation; pentose phosphate pathway; D-ribulose 5-phosphate from D-glucose 6-phosphate (oxidative stage): step 1/3. In terms of biological role, cytosolic glucose-6-phosphate dehydrogenase that catalyzes the first and rate-limiting step of the oxidative branch within the pentose phosphate pathway/shunt, an alternative route to glycolysis for the dissimilation of carbohydrates and a major source of reducing power and metabolic intermediates for fatty acid and nucleic acid biosynthetic processes. This chain is Glucose-6-phosphate 1-dehydrogenase (G6PD), found in Osphranter robustus (Wallaroo).